We begin with the raw amino-acid sequence, 372 residues long: Mitogen-activated protein kinase spk1 (372 aa).

The segment covering 1–25 (MASATSTPTIADGNSNKESVATSRS) has biased composition (polar residues). Residues 1–29 (MASATSTPTIADGNSNKESVATSRSPHTH) form a disordered region. In terms of domain architecture, Protein kinase spans 39–327 (YEMINLIGQG…AEEALKHPYV (289 aa)). ATP contacts are provided by residues 45-53 (IGQGAYGVV) and Lys-68. Asp-163 functions as the Proton acceptor in the catalytic mechanism. Thr-199 is subject to Phosphothreonine. The TXY motif lies at 199 to 201 (TEY). Position 201 is a phosphotyrosine (Tyr-201).

The protein belongs to the protein kinase superfamily. CMGC Ser/Thr protein kinase family. MAP kinase subfamily. Mg(2+) serves as cofactor. Post-translationally, dually phosphorylated on Thr-199 and Tyr-201, which activates the enzyme.

It is found in the nucleus. It catalyses the reaction L-seryl-[protein] + ATP = O-phospho-L-seryl-[protein] + ADP + H(+). The catalysed reaction is L-threonyl-[protein] + ATP = O-phospho-L-threonyl-[protein] + ADP + H(+). Activated by tyrosine and threonine phosphorylation. Involved in mating signal transduction pathway. This chain is Mitogen-activated protein kinase spk1 (spk1), found in Schizosaccharomyces pombe (strain 972 / ATCC 24843) (Fission yeast).